Consider the following 386-residue polypeptide: N-terminal EF-hand calcium-binding protein 2 (386 aa).

Arg10 is modified (omega-N-methylarginine). Arg42 bears the Asymmetric dimethylarginine mark. EF-hand domains follow at residues 60 to 95 (GGTA…GVLN) and 96 to 129 (EKEL…HMGD). Residues Asp73, Asn75, Asp77, Lys79, Glu84, Asp107, Asp109, Thr111, His113, and Glu118 each coordinate Ca(2+). Residues 170 to 201 (LKETANQIQSLLSSVESAVEAIEEQTSQLRQN) are a coiled coil. The ABM domain maps to 286 to 375 (QLVRQEMAVC…SQPEALSRIL (90 aa)).

Interacts (calcium-dependent) with ADORA2A and GRM5. As to expression, expressed in brain. Expressed in the spinal dorsal horn with especially strong expression in lamina IIi; found in excitory synaptic boutons and in ependymal cells (at protein level).

It is found in the cytoplasm. The protein resides in the cell projection. The protein localises to the dendrite. It localises to the axon. Its subcellular location is the cell membrane. Functionally, may act as a signaling scaffold protein that senses intracellular calcium. Can modulate ligand-induced internalization of ADORA2A and coupling efficiency of mGluR5/GRM5; for both receptors may regulate signaling activity such as promoting MAPK1/3 (ERK1/2) activation. The polypeptide is N-terminal EF-hand calcium-binding protein 2 (NECAB2) (Homo sapiens (Human)).